The primary structure comprises 1907 residues: Chromatin modification-related protein EAF1 B (1907 aa).

4 disordered regions span residues 108–208, 261–287, 323–373, and 449–469; these read ASPH…TDLV, NRVS…GSKT, GGSP…SHAN, and NQSH…ETEK. Over residues 140-151 the composition is skewed to basic and acidic residues; it reads SENKSVEGERNL. Polar residues-rich tracts occupy residues 261-270, 333-342, and 355-372; these read NRVSSNSLNT, GQKNSSTQLN, and TNRG…SSHA. Residues 563–641 enclose the HSA domain; sequence CGTAPVEVRE…LSYAILQFWS (79 aa). Disordered regions lie at residues 836 to 909 and 928 to 952; these read SSSL…AVQK and AETS…TWHL. The segment covering 856 to 866 has biased composition (basic residues); that stretch reads RRVRTASRHRV. 2 stretches are compositionally biased toward polar residues: residues 884-898 and 942-952; these read TDAS…QDEY and QGSAYDQTWHL. Residues 1049–1105 form the SANT domain; the sequence is SGNPWSLFEDQALVVLVHDMGPNWELISDAMNSTLKIKYIYRNPTECKDRHKILMDK. 8 disordered regions span residues 1107–1131, 1235–1266, 1296–1319, 1429–1465, 1477–1594, 1638–1703, 1767–1791, and 1824–1907; these read AGDG…PGIP, PVLP…GLQS, LSGR…DRGH, GHLS…QQEA, YLQQ…QQLN, VRPD…SPAT, VPQS…QASN, and VNNS…TKVE. Composition is skewed to polar residues over residues 1116 to 1125, 1242 to 1266, 1296 to 1310, 1431 to 1444, and 1453 to 1462; these read DSGNSQSYPS, AHPS…GLQS, LSGR…STPA, LSQQ…SHVL, and QSPSQATGAQ. Residues 1493–1512 show a composition bias toward low complexity; sequence PHVQQPQGSSVSSSSQNSPQ. A compositionally biased stretch (pro residues) spans 1513–1529; that stretch reads TQPPVSPQPLSMPPVSP. Polar residues-rich tracts occupy residues 1532-1545, 1554-1568, 1585-1594, 1640-1655, 1662-1672, 1681-1703, 1769-1782, and 1824-1844; these read NINA…QKSQ, SPQS…QAGK, RQPTQGQQLN, PDQQ…TDLQ, PLSSNHSQQLP, PSPQ…SPAT, QSVT…SMGT, and VNNS…NQGL. Basic and acidic residues-rich tracts occupy residues 1863–1872 and 1882–1892; these read SEEKRPKLPE and LASEEQPHLEE.

It belongs to the EAF1 family. In terms of assembly, component of the NuA4 histone acetyltransferase complex. Interacts with ARP4 and SWC4, and (via HSA domain) with TAF14 and TAF14B. In terms of tissue distribution, expressed in leaves.

It is found in the nucleus. Functionally, component of the NuA4 histone acetyltransferase complex which is involved in transcriptional activation of selected genes principally by acetylation of nucleosomal histone H4 and H2A. This chain is Chromatin modification-related protein EAF1 B (EAF1B), found in Arabidopsis thaliana (Mouse-ear cress).